A 117-amino-acid chain; its full sequence is Immunoglobulin lambda variable 2 (117 aa).

An N-terminal signal peptide occupies residues Met-1–Ser-19. Position 20 is a pyrrolidone carboxylic acid (Gln-20). The 98-residue stretch at Gln-20–Phe-117 folds into the Ig-like domain.

The chain is Immunoglobulin lambda variable 2 from Mus musculus (Mouse).